Here is a 224-residue protein sequence, read N- to C-terminus: Myogenin (224 aa).

Ser-77 and Ser-79 each carry phosphoserine; by CaMK2G. The 52-residue stretch at 81 to 132 (DRRRAATLREKRRLKKVNEAFEALKRSTLLNPNQRLPKVEILRSAIQYIERL) folds into the bHLH domain. Residue Thr-87 is modified to Phosphothreonine; by CaMK2G.

Homodimer and heterodimer with E12; heterodimerization enhances MYOG DNA-binding and transcriptional activities. Interacts with SMARCA4/BRG1/BAF190A. Interacts (via C-terminal region) with SSRP1 and SUPT16H; the interaction is indicative of an interaction with the FACT complex. Interacts with CSRP3. Phosphorylated by CAMK2G on threonine and serine amino acids in a muscle activity-dependent manner. Phosphorylation of Thr-87 impairs both DNA-binding and trans-activation functions in contracting muscles.

It localises to the nucleus. Functionally, acts as a transcriptional activator that promotes transcription of muscle-specific target genes and plays a role in muscle differentiation, cell cycle exit and muscle atrophy. Essential for the development of functional embryonic skeletal fiber muscle differentiation. However is dispensable for postnatal skeletal muscle growth; phosphorylation by CAMK2G inhibits its transcriptional activity in respons to muscle activity. Required for the recruitment of the FACT complex to muscle-specific promoter regions, thus promoting gene expression initiation. During terminal myoblast differentiation, plays a role as a strong activator of transcription at loci with an open chromatin structure previously initiated by MYOD1. Together with MYF5 and MYOD1, co-occupies muscle-specific gene promoter core regions during myogenesis. Also cooperates with myocyte-specific enhancer factor MEF2D and BRG1-dependent recruitment of SWI/SNF chromatin-remodeling enzymes to alter chromatin structure at myogenic late gene promoters. Facilitates cell cycle exit during terminal muscle differentiation through the up-regulation of miR-20a expression, which in turn represses genes involved in cell cycle progression. Binds to the E-box containing (E1) promoter region of the miR-20a gene. Also plays a role in preventing reversal of muscle cell differentiation. Contributes to the atrophy-related gene expression in adult denervated muscles. Induces fibroblasts to differentiate into myoblasts. The protein is Myogenin (MYOG) of Homo sapiens (Human).